The sequence spans 70 residues: Large ribosomal subunit protein bL31 (70 aa).

The Zn(2+) site is built by C16, C18, C38, and C41.

This sequence belongs to the bacterial ribosomal protein bL31 family. Type A subfamily. As to quaternary structure, part of the 50S ribosomal subunit. Zn(2+) is required as a cofactor.

Functionally, binds the 23S rRNA. The protein is Large ribosomal subunit protein bL31 of Bifidobacterium adolescentis (strain ATCC 15703 / DSM 20083 / NCTC 11814 / E194a).